The sequence spans 286 residues: uncharacterized protein (286 aa).

Residues 8 to 28 traverse the membrane as a helical segment; sequence PLSGFISSLIWWLLFFYLIMA.

It to M.jannaschii MJ1495.

The protein localises to the membrane. This is an uncharacterized protein from Methanocaldococcus jannaschii (strain ATCC 43067 / DSM 2661 / JAL-1 / JCM 10045 / NBRC 100440) (Methanococcus jannaschii).